We begin with the raw amino-acid sequence, 325 residues long: Brain mitochondrial carrier protein 1 (325 aa).

Transmembrane regions (helical) follow at residues 38-54 (GLNW…SIVA), 112-128 (LRQA…YQSL), 145-165 (MICG…TDVL), 199-215 (GVVP…GVEL), 240-256 (VSSF…SNPV), and 298-315 (GFWP…IFFI). 3 Solcar repeats span residues 42–131 (KPFV…LKRL), 139–224 (ETLL…TKKH), and 233–323 (DTIL…LKRL).

Belongs to the mitochondrial carrier (TC 2.A.29) family. Homotetramer. Mainly expressed in brain, particularly abundant in cortex, hippocampus thalamus, amygdala and hypothalamus. Highly expressed in heart and kidney, but not liver or lung (at protein level). In the nervous system, expressed in cortex, basal ganglia, substantia nigra, cerebellum, and spinal cord (at protein level).

It is found in the mitochondrion inner membrane. It carries out the reaction sulfite(in) + sulfate(out) = sulfite(out) + sulfate(in). The catalysed reaction is thiosulfate(in) + sulfate(out) = thiosulfate(out) + sulfate(in). It catalyses the reaction sulfate(out) + phosphate(in) = sulfate(in) + phosphate(out). The enzyme catalyses oxalate(in) + sulfate(out) = oxalate(out) + sulfate(in). It carries out the reaction malonate(in) + sulfate(out) = malonate(out) + sulfate(in). The catalysed reaction is maleate(in) + sulfate(out) = maleate(out) + sulfate(in). It catalyses the reaction (S)-malate(in) + sulfate(out) = (S)-malate(out) + sulfate(in). The enzyme catalyses (3S)-citramalate(in) + sulfate(out) = (3S)-citramalate(out) + sulfate(in). It carries out the reaction (3R)-citramalate(in) + sulfate(out) = (3R)-citramalate(out) + sulfate(in). The catalysed reaction is sulfate(out) + succinate(in) = sulfate(in) + succinate(out). It catalyses the reaction (S,S)-tartrate(in) + sulfate(out) = (S,S)-tartrate(out) + sulfate(in). The enzyme catalyses (2R,3R)-tartrate(in) + sulfate(out) = (2R,3R)-tartrate(out) + sulfate(in). It carries out the reaction D-aspartate(in) + sulfate(out) = D-aspartate(out) + sulfate(in). The catalysed reaction is L-aspartate(in) + sulfate(out) = L-aspartate(out) + sulfate(in). It catalyses the reaction sulfate(in) = sulfate(out). The enzyme catalyses phosphate(in) = phosphate(out). It carries out the reaction (S)-malate(out) = (S)-malate(in). The catalysed reaction is citrate(in) = citrate(out). It catalyses the reaction L-aspartate(out) = L-aspartate(in). The enzyme catalyses L-glutamate(out) = L-glutamate(in). It carries out the reaction H(+)(in) = H(+)(out). The catalysed reaction is chloride(in) = chloride(out). Transports inorganic anions (sulfate, sulfite, thiosulfate and phosphate) and, to a lesser extent, a variety of dicarboxylates (e.g. malonate, malate and citramalate) and, even more so, aspartate and glutamate and tricarboxylates. May catalyze the export of sulfite and thiosulfate (the hydrogen sulfide degradation products) from the mitochondria, thereby modulating the level of the hydrogen sulfide. Also can mediate a very low unidirectional transport of anions including sulfate, phosphate, (S)-malate, citrate, L-aspartate and L-glutamate. Maintains oxidative balance (through uncoupling activities) and ATP production (by modifying mitochondrial membrane potential). Is able to transport protons across lipid membranes. Also exhibits transmembrane chloride transport activity to a lesser extent. May modify mitochondrial respiratory efficiency and mitochondrial oxidant production. The polypeptide is Brain mitochondrial carrier protein 1 (Mus musculus (Mouse)).